A 184-amino-acid chain; its full sequence is ATP synthase subunit b, chloroplastic (184 aa).

Residues 27–49 traverse the membrane as a helical segment; it reads LATNLINLSVVLGVLIFFGKGVL.

This sequence belongs to the ATPase B chain family. In terms of assembly, F-type ATPases have 2 components, F(1) - the catalytic core - and F(0) - the membrane proton channel. F(1) has five subunits: alpha(3), beta(3), gamma(1), delta(1), epsilon(1). F(0) has four main subunits: a(1), b(1), b'(1) and c(10-14). The alpha and beta chains form an alternating ring which encloses part of the gamma chain. F(1) is attached to F(0) by a central stalk formed by the gamma and epsilon chains, while a peripheral stalk is formed by the delta, b and b' chains.

It localises to the plastid. It is found in the chloroplast thylakoid membrane. Functionally, f(1)F(0) ATP synthase produces ATP from ADP in the presence of a proton or sodium gradient. F-type ATPases consist of two structural domains, F(1) containing the extramembraneous catalytic core and F(0) containing the membrane proton channel, linked together by a central stalk and a peripheral stalk. During catalysis, ATP synthesis in the catalytic domain of F(1) is coupled via a rotary mechanism of the central stalk subunits to proton translocation. Its function is as follows. Component of the F(0) channel, it forms part of the peripheral stalk, linking F(1) to F(0). This is ATP synthase subunit b, chloroplastic from Liriodendron tulipifera (Tuliptree).